A 301-amino-acid chain; its full sequence is tRNA pseudouridine synthase B (301 aa).

Catalysis depends on D48, which acts as the Nucleophile.

The protein belongs to the pseudouridine synthase TruB family. Type 1 subfamily.

It catalyses the reaction uridine(55) in tRNA = pseudouridine(55) in tRNA. Functionally, responsible for synthesis of pseudouridine from uracil-55 in the psi GC loop of transfer RNAs. The chain is tRNA pseudouridine synthase B from Mycobacterium ulcerans (strain Agy99).